We begin with the raw amino-acid sequence, 56 residues long: Ovomucoid (56 aa).

The region spanning valine 6–cysteine 56 is the Kazal-like domain. 3 cysteine pairs are disulfide-bonded: cysteine 8-cysteine 38, cysteine 16-cysteine 35, and cysteine 24-cysteine 56. Residue asparagine 45 is glycosylated (N-linked (GlcNAc...) asparagine).

It localises to the secreted. The chain is Ovomucoid from Penelope jacquacu (Spix's guan).